A 204-amino-acid chain; its full sequence is Holliday junction branch migration complex subunit RuvA (204 aa).

A domain I region spans residues 1-64; the sequence is MIGRLRGIIL…EDAQLLFGFN (64 aa). Residues 65-143 form a domain II region; it reads SKPERALFRE…GMHGDLFASD (79 aa). Positions 144–155 are flexible linker; that stretch reads APFALTSEMPKE. Residues 156–204 form a domain III region; that stretch reads TANDAEGEAVAALTALGYKPQEASRMIVKVGKPDADCETLIREALRAAI.

The protein belongs to the RuvA family. In terms of assembly, homotetramer. Forms an RuvA(8)-RuvB(12)-Holliday junction (HJ) complex. HJ DNA is sandwiched between 2 RuvA tetramers; dsDNA enters through RuvA and exits via RuvB. An RuvB hexamer assembles on each DNA strand where it exits the tetramer. Each RuvB hexamer is contacted by two RuvA subunits (via domain III) on 2 adjacent RuvB subunits; this complex drives branch migration. In the full resolvosome a probable DNA-RuvA(4)-RuvB(12)-RuvC(2) complex forms which resolves the HJ.

It localises to the cytoplasm. In terms of biological role, the RuvA-RuvB-RuvC complex processes Holliday junction (HJ) DNA during genetic recombination and DNA repair, while the RuvA-RuvB complex plays an important role in the rescue of blocked DNA replication forks via replication fork reversal (RFR). RuvA specifically binds to HJ cruciform DNA, conferring on it an open structure. The RuvB hexamer acts as an ATP-dependent pump, pulling dsDNA into and through the RuvAB complex. HJ branch migration allows RuvC to scan DNA until it finds its consensus sequence, where it cleaves and resolves the cruciform DNA. This is Holliday junction branch migration complex subunit RuvA from Erwinia tasmaniensis (strain DSM 17950 / CFBP 7177 / CIP 109463 / NCPPB 4357 / Et1/99).